Here is a 192-residue protein sequence, read N- to C-terminus: uncharacterized protein (192 aa).

The 132-residue stretch at 29–160 folds into the Nudix hydrolase domain; the sequence is HRQAAVLIPI…PLDIYRRGDS (132 aa). The Nudix box signature appears at 67–89; that stretch reads GAVDDTDASVIAAALREAEEEVA. E83 and E87 together coordinate Mg(2+).

It belongs to the Nudix hydrolase family. PCD1 subfamily. Requires Mn(2+) as cofactor. The cofactor is Mg(2+).

Functionally, probably mediates the hydrolysis of some nucleoside diphosphate derivatives. This is an uncharacterized protein from Escherichia coli O139:H28 (strain E24377A / ETEC).